We begin with the raw amino-acid sequence, 231 residues long: Heptaprenylglyceryl phosphate synthase (231 aa).

K12 contacts sn-glycerol 1-phosphate. Residues D14 and T40 each coordinate Mg(2+). Residues 159-164 (YMEYSG), G189, and 209-210 (GN) contribute to the sn-glycerol 1-phosphate site.

This sequence belongs to the GGGP/HepGP synthase family. Group I subfamily. In terms of assembly, homodimer. The cofactor is Mg(2+).

It carries out the reaction sn-glycerol 1-phosphate + all-trans-heptaprenyl diphosphate = 3-heptaprenyl-sn-glycero-1-phosphate + diphosphate. The protein operates within membrane lipid metabolism; glycerophospholipid metabolism. Its function is as follows. Prenyltransferase that catalyzes in vivo the transfer of the heptaprenyl moiety of heptaprenyl pyrophosphate (HepPP; 35 carbon atoms) to the C3 hydroxyl of sn-glycerol-1-phosphate (G1P), producing heptaprenylglyceryl phosphate (HepGP). This reaction is an ether-bond-formation step in the biosynthesis of archaea-type G1P-based membrane lipids found in Bacillales. The sequence is that of Heptaprenylglyceryl phosphate synthase from Brevibacillus brevis (strain 47 / JCM 6285 / NBRC 100599).